Here is a 283-residue protein sequence, read N- to C-terminus: Non-selective voltage-gated ion channel VDAC3 (283 aa).

Cysteine 2 bears the N-acetylcysteine mark. Threonine 4 carries the post-translational modification Phosphothreonine. N6-acetyllysine is present on residues lysine 12, lysine 15, and lysine 20. Transmembrane regions (beta stranded) follow at residues 26–35 (MVKIDLRTKS) and 39–47 (VEFSTSGHA). Lysine 53 is covalently cross-linked (Glycyl lysine isopeptide (Lys-Gly) (interchain with G-Cter in ubiquitin)). 3 beta stranded membrane-spanning segments follow: residues 54-64 (ASGNLETKYKV), 69-76 (LTFTQKWN), and 80-89 (TLGTEISLEN). N6-acetyllysine is present on lysine 90. Residues 95-104 (LKLTLDTIFV) form a beta stranded membrane-spanning segment. Residues lysine 109 and lysine 110 each participate in a glycyl lysine isopeptide (Lys-Gly) (interchain with G-Cter in ubiquitin) cross-link. A run of 10 beta stranded transmembrane segments spans residues 111 to 120 (SGKLKASYKR), 123 to 130 (FSLGSNVD), 137 to 145 (TIYGWAVLA), 150 to 158 (LAGYQMSFD), 163 to 175 (KLSQ…GYKA), 178 to 185 (FQLHTHVN), 189 to 198 (EFGGSIYQKV), 202 to 211 (IETSINLAWT), 218 to 227 (RFGIAAKYKL), and 231 to 238 (TSLSAKVN). Serine 241 is modified (phosphoserine). Residues 242–244 (LIG) and 260–264 (SALID) contribute to the NAD(+) site. The next 2 membrane-spanning stretches (beta stranded) occupy residues 242–251 (LIGLGYTQTL) and 254–263 (GVKLTLSALI). Residue lysine 266 is modified to N6-acetyllysine; alternate. Residue lysine 266 forms a Glycyl lysine isopeptide (Lys-Gly) (interchain with G-Cter in ubiquitin); alternate linkage. Residues 273 to 282 (HKVGLGFELE) form a beta stranded membrane-spanning segment.

This sequence belongs to the eukaryotic mitochondrial porin family. Interacts with ARMC12 in a TBC1D21-dependent manner. Interacts with MISFA. Ubiquitinated by PRKN during mitophagy, leading to its degradation and enhancement of mitophagy. Deubiquitinated by USP30.

It localises to the mitochondrion outer membrane. The protein resides in the membrane. It catalyses the reaction chloride(in) = chloride(out). It carries out the reaction K(+)(in) = K(+)(out). In terms of biological role, non-selective voltage-gated ion channel that mediates the transport of anions and cations through the mitochondrion outer membrane and plasma membrane. Forms a high-conducting channel with a stable open state and a voltage-induced closure with a mild preference for anions over cations. Involved in male fertility and sperm mitochondrial sheath formation. This chain is Non-selective voltage-gated ion channel VDAC3, found in Oryctolagus cuniculus (Rabbit).